The chain runs to 467 residues: Congo red hypersensitive protein 2 (467 aa).

Residues 1 to 23 form the signal peptide; it reads MAIVNSWLICLVSIFSFVVRVEA. Asn-28 carries N-linked (GlcNAc...) asparagine glycosylation. Cys-56 and Cys-67 are disulfide-bonded. The GH16 domain maps to 63–280; sequence SHDSCMPVPI…WSGGEINWDA (218 aa). Asn-96 is a glycosylation site (N-linked (GlcNAc...) asparagine). Glu-166 (nucleophile) is an active-site residue. Glu-170 functions as the Proton donor in the catalytic mechanism. Residue Glu-170 participates in chitin binding. N-linked (GlcNAc...) asparagine glycosylation is found at Asn-190, Asn-196, Asn-233, and Asn-237. A chitin-binding site is contributed by Trp-257. N-linked (GlcNAc...) asparagine glycosylation is present at Asn-261. Thr-268 contacts chitin. N-linked (GlcNAc...) asparagine glycosylation is found at Asn-297 and Asn-310. The interval 337–444 is disordered; the sequence is MDSDEGSGLD…SSSTSSMSGN (108 aa). The segment covering 351 to 444 has biased composition (low complexity); that stretch reads ATTSSTQKSS…SSSTSSMSGN (94 aa). Asn-445 carries GPI-anchor amidated asparagine lipidation. The propeptide at 446-467 is removed in mature form; sequence AGANVAANWRLTVLCVILGYVL.

The protein belongs to the glycosyl hydrolase 16 family. CRH1 subfamily. The GPI-anchor is attached to the protein in the endoplasmic reticulum and serves to target the protein to the cell surface. There, the glucosamine-inositol phospholipid moiety is cleaved off and the GPI-modified mannoprotein is covalently attached via its lipidless GPI glycan remnant to the 1,6-beta-glucan of the outer cell wall layer.

The protein localises to the secreted. Its subcellular location is the cell wall. It localises to the membrane. It carries out the reaction Random endo-hydrolysis of N-acetyl-beta-D-glucosaminide (1-&gt;4)-beta-linkages in chitin and chitodextrins.. Functionally, dual chitinase/transglycosylase that plays a role in cell wall architecture. Chitinase and transglycosylase activities are coupled. Required for the polysaccharide cross-linking at the septa and the cell wall. More specifically, transfers chitin to both beta(1-3)- and beta(1-6)glucan in the cell wall. The minimal number of intact hexopyranose units required in the molecule of the acceptor oligosaccharide is two and the effectivity of the acceptor increased with the increasing length of its oligosaccharide chain. In Saccharomyces cerevisiae (strain ATCC 204508 / S288c) (Baker's yeast), this protein is Congo red hypersensitive protein 2.